A 32-amino-acid polypeptide reads, in one-letter code: uncharacterized protein (32 aa).

This is an uncharacterized protein from Gallus gallus (Chicken).